Consider the following 208-residue polypeptide: Mediator of RNA polymerase II transcription subunit 18 (208 aa).

Residue S66 is modified to Phosphoserine.

Belongs to the Mediator complex subunit 18 family. As to quaternary structure, component of the Mediator complex, which is composed of MED1, MED4, MED6, MED7, MED8, MED9, MED10, MED11, MED12, MED13, MED13L, MED14, MED15, MED16, MED17, MED18, MED19, MED20, MED21, MED22, MED23, MED24, MED25, MED26, MED27, MED29, MED30, MED31, CCNC, CDK8 and CDC2L6/CDK11. The MED12, MED13, CCNC and CDK8 subunits form a distinct module termed the CDK8 module. Mediator containing the CDK8 module is less active than Mediator lacking this module in supporting transcriptional activation. Individual preparations of the Mediator complex lacking one or more distinct subunits have been variously termed ARC, CRSP, DRIP, PC2, SMCC and TRAP.

The protein resides in the nucleus. In terms of biological role, component of the Mediator complex, a coactivator involved in the regulated transcription of nearly all RNA polymerase II-dependent genes. Mediator functions as a bridge to convey information from gene-specific regulatory proteins to the basal RNA polymerase II transcription machinery. Mediator is recruited to promoters by direct interactions with regulatory proteins and serves as a scaffold for the assembly of a functional preinitiation complex with RNA polymerase II and the general transcription factors. This is Mediator of RNA polymerase II transcription subunit 18 (Med18) from Mus musculus (Mouse).